Here is a 570-residue protein sequence, read N- to C-terminus: Hydroxylamine reductase (570 aa).

Residues Cys-5, Cys-8, Cys-17, and Cys-23 each contribute to the [4Fe-4S] cluster site. Residues His-266, Glu-290, Cys-334, Cys-425, Cys-453, Cys-478, Glu-513, and Lys-515 each contribute to the hybrid [4Fe-2O-2S] cluster site. Cys-425 is subject to Cysteine persulfide.

It belongs to the HCP family. The cofactor is [4Fe-4S] cluster. Requires hybrid [4Fe-2O-2S] cluster as cofactor.

It localises to the cytoplasm. It carries out the reaction A + NH4(+) + H2O = hydroxylamine + AH2 + H(+). In terms of biological role, catalyzes the reduction of hydroxylamine to form NH(3) and H(2)O. This is Hydroxylamine reductase from Clostridium botulinum (strain Kyoto / Type A2).